Reading from the N-terminus, the 311-residue chain is 4-diphosphocytidyl-2-C-methyl-D-erythritol kinase (311 aa).

The active site involves K16. 100–110 is a binding site for ATP; the sequence is PIGAGLAGGSS. D142 is an active-site residue.

Belongs to the GHMP kinase family. IspE subfamily.

It catalyses the reaction 4-CDP-2-C-methyl-D-erythritol + ATP = 4-CDP-2-C-methyl-D-erythritol 2-phosphate + ADP + H(+). It functions in the pathway isoprenoid biosynthesis; isopentenyl diphosphate biosynthesis via DXP pathway; isopentenyl diphosphate from 1-deoxy-D-xylulose 5-phosphate: step 3/6. Functionally, catalyzes the phosphorylation of the position 2 hydroxy group of 4-diphosphocytidyl-2C-methyl-D-erythritol. The protein is 4-diphosphocytidyl-2-C-methyl-D-erythritol kinase of Prochlorococcus marinus (strain MIT 9215).